Reading from the N-terminus, the 525-residue chain is Ribosomal protein S6 kinase beta-1 (525 aa).

Residues 1–54 (MRRRRRRDGFYPAPDFRDREAEDMAGVFDIDLDQPEDAGSEDELEEGGQLNESM) form a disordered region. Positions 28 to 32 (FDIDL) match the TOS motif motif. Residues 30–46 (IDLDQPEDAGSEDELEE) show a composition bias toward acidic residues. The 262-residue stretch at 91 to 352 (FELLRVLGKG…AGEVQAHPFF (262 aa)) folds into the Protein kinase domain. ATP-binding positions include 97 to 105 (LGKGGYGKV) and Lys-123. Catalysis depends on Asp-218, which acts as the Proton acceptor. Position 252 is a phosphothreonine; by PDPK1 (Thr-252). The AGC-kinase C-terminal domain occupies 353-423 (RHINWEELLA…VAPSVLESVK (71 aa)). Residues 380–399 (SQFDSKFTRQTPVDSPDDST) are disordered. Over residues 381 to 399 (QFDSKFTRQTPVDSPDDST) the composition is skewed to polar residues. Position 394 is a phosphoserine (Ser-394). At Thr-412 the chain carries Phosphothreonine; by MTOR, NEK6 and NEK7. Positions 424 to 525 (EKFSFEPKIR…KRPEHLRMNL (102 aa)) are autoinhibitory domain. Ser-434 and Ser-441 each carry phosphoserine. Thr-444 bears the Phosphothreonine mark. 2 positions are modified to phosphoserine: Ser-447 and Ser-452. The tract at residues 486–509 (VTTSGEASAPLPIRQPNSGPYKKQ) is disordered. At Lys-516 the chain carries N6-acetyllysine.

The protein belongs to the protein kinase superfamily. AGC Ser/Thr protein kinase family. S6 kinase subfamily. Interacts with PPP1R9A/neurabin-1. Interacts with RPTOR. Interacts with IRS1. Interacts with EIF3B and EIF3C. Interacts with TRAF4. Interacts with POLDIP3. Interacts (via N-terminus) with IER5. Phosphorylation at Thr-412 is regulated by mTORC1. The phosphorylation at this site is maintained by an agonist-dependent autophosphorylation mechanism. Activated by phosphorylation at Thr-252 by PDPK1. Dephosphorylation by PPP1CC at Thr-412 in mitochondrion.

The protein localises to the cytoplasm. It is found in the synapse. It localises to the synaptosome. The protein resides in the mitochondrion outer membrane. Its subcellular location is the mitochondrion. The enzyme catalyses L-seryl-[protein] + ATP = O-phospho-L-seryl-[protein] + ADP + H(+). It catalyses the reaction L-threonyl-[protein] + ATP = O-phospho-L-threonyl-[protein] + ADP + H(+). Activation requires multiple phosphorylation events on serine/threonine residues. Activation appears to be first mediated by phosphorylation of multiple sites in the autoinhibitory domain, which facilitates phosphorylation at Thr-412, disrupting the autoinhibitory mechanism and allowing phosphorylation of Thr-252 by PDPK1. The active conformation of the kinase is believed to be stabilized by a mechanism involving three conserved phosphorylation sites located in the kinase domain activation loop (Thr-252) and in the AGC-kinase C-terminal domain (Ser-394 in the middle of the tail/linker region and Thr-412 within a hydrophobic motif at its end). Activated by mTORC1; isoform Alpha I and isoform Alpha II are sensitive to rapamycin, which inhibits activating phosphorylation at Thr-412. Activated by PDPK1. Functionally, serine/threonine-protein kinase that acts downstream of mTOR signaling in response to growth factors and nutrients to promote cell proliferation, cell growth and cell cycle progression. Regulates protein synthesis through phosphorylation of EIF4B, RPS6 and EEF2K, and contributes to cell survival by repressing the pro-apoptotic function of BAD. Under conditions of nutrient depletion, the inactive form associates with the EIF3 translation initiation complex. Upon mitogenic stimulation, phosphorylation by the mechanistic target of rapamycin complex 1 (mTORC1) leads to dissociation from the EIF3 complex and activation. The active form then phosphorylates and activates several substrates in the pre-initiation complex, including the EIF2B complex and the cap-binding complex component EIF4B. Also controls translation initiation by phosphorylating a negative regulator of EIF4A, PDCD4, targeting it for ubiquitination and subsequent proteolysis. Promotes initiation of the pioneer round of protein synthesis by phosphorylating POLDIP3/SKAR. In response to IGF1, activates translation elongation by phosphorylating EEF2 kinase (EEF2K), which leads to its inhibition and thus activation of EEF2. Also plays a role in feedback regulation of mTORC2 by mTORC1 by phosphorylating MAPKAP1/SIN1, MTOR and RICTOR, resulting in the inhibition of mTORC2 and AKT1 signaling. Also involved in feedback regulation of mTORC1 and mTORC2 by phosphorylating DEPTOR. Mediates cell survival by phosphorylating the pro-apoptotic protein BAD and suppressing its pro-apoptotic function. Phosphorylates mitochondrial URI1 leading to dissociation of a URI1-PPP1CC complex. The free mitochondrial PPP1CC can then dephosphorylate RPS6KB1 at Thr-412, which is proposed to be a negative feedback mechanism for the RPS6KB1 anti-apoptotic function. Mediates TNF-alpha-induced insulin resistance by phosphorylating IRS1 at multiple serine residues, resulting in accelerated degradation of IRS1. In cells lacking functional TSC1-2 complex, constitutively phosphorylates and inhibits GSK3B. May be involved in cytoskeletal rearrangement through binding to neurabin. Phosphorylates and activates the pyrimidine biosynthesis enzyme CAD, downstream of MTOR. Following activation by mTORC1, phosphorylates EPRS and thereby plays a key role in fatty acid uptake by adipocytes and also most probably in interferon-gamma-induced translation inhibition. The sequence is that of Ribosomal protein S6 kinase beta-1 (RPS6KB1) from Oryctolagus cuniculus (Rabbit).